The chain runs to 60 residues: UPF0434 protein YcaR (60 aa).

It belongs to the UPF0434 family.

In Escherichia coli O81 (strain ED1a), this protein is UPF0434 protein YcaR.